Reading from the N-terminus, the 259-residue chain is Oxaloacetate tautomerase FMP41, mitochondrial (259 aa).

Residues Glu-87, Glu-89, and Asp-121 each contribute to the Mg(2+) site.

Belongs to the FAH family. It depends on Mg(2+) as a cofactor. The cofactor is Mn(2+).

Its subcellular location is the mitochondrion. It catalyses the reaction oxaloacetate = enol-oxaloacetate. Its function is as follows. Tautomerase that converts enol-oxaloacetate, a strong inhibitor of succinate dehydrogenase, to the physiological keto form of oxaloacetate. In Saccharomyces cerevisiae (strain ATCC 204508 / S288c) (Baker's yeast), this protein is Oxaloacetate tautomerase FMP41, mitochondrial.